The primary structure comprises 226 residues: MPKGIIGKKIGMTKVFVNGKAIPVTVIQAGPCYVAYTRTQEKDGYNAVALTFGERKEKNIPKPLLAIFKKANIKPAKVIKEFPLKDGETVEPGQEIRIENVFEKGDLVDITGKSKGRGFTSVMKRWDFAGFPKSHGHRYHRAVGSIGCRTEPGRVWKTKRMAGHYGNETVTVLGLEVVDIIPEKNVILVKGSVPGAPNSTVFLKQSVIADRRKGKLKLAKSKAMYA.

This sequence belongs to the universal ribosomal protein uL3 family. Part of the 50S ribosomal subunit. Forms a cluster with proteins L14 and L19.

Functionally, one of the primary rRNA binding proteins, it binds directly near the 3'-end of the 23S rRNA, where it nucleates assembly of the 50S subunit. The sequence is that of Large ribosomal subunit protein uL3 from Sulfurihydrogenibium sp. (strain YO3AOP1).